A 238-amino-acid polypeptide reads, in one-letter code: 3-dehydroquinate dehydratase (238 aa).

Residues 35 to 37 (ELR) and R68 each bind 3-dehydroquinate. H131 (proton donor/acceptor) is an active-site residue. K158 functions as the Schiff-base intermediate with substrate in the catalytic mechanism. 3-dehydroquinate is bound by residues R200 and Q223.

It belongs to the type-I 3-dehydroquinase family. Homodimer.

It carries out the reaction 3-dehydroquinate = 3-dehydroshikimate + H2O. Its pathway is metabolic intermediate biosynthesis; chorismate biosynthesis; chorismate from D-erythrose 4-phosphate and phosphoenolpyruvate: step 3/7. Functionally, involved in the third step of the chorismate pathway, which leads to the biosynthesis of aromatic amino acids. Catalyzes the cis-dehydration of 3-dehydroquinate (DHQ) and introduces the first double bond of the aromatic ring to yield 3-dehydroshikimate. The protein is 3-dehydroquinate dehydratase of Staphylococcus epidermidis (strain ATCC 35984 / DSM 28319 / BCRC 17069 / CCUG 31568 / BM 3577 / RP62A).